Here is a 327-residue protein sequence, read N- to C-terminus: uncharacterized protein (327 aa).

Residues 12–32 (LVVVVVAIAIFTLVLLMLWEG) traverse the membrane as a helical segment. A disordered region spans residues 149 to 170 (AFSAVETSEGSDQESEGADEQG). A compositionally biased stretch (acidic residues) spans 157 to 167 (EGSDQESEGAD). The stretch at 162–227 (ESEGADEQGK…LDEENREVAE (66 aa)) forms a coiled coil.

The protein resides in the membrane. This is an uncharacterized protein from Encephalitozoon cuniculi (strain GB-M1) (Microsporidian parasite).